A 410-amino-acid chain; its full sequence is Diguanylate cyclase DgcM (410 aa).

PAS domains lie at 3–70 (THNF…NQHD) and 129–198 (GFYA…HLPG). The 53-residue stretch at 199 to 251 (GHKPLNFVHKLADGSTRHVQTYAGPIEIYGDKLMLCIVHDITEQKRLEEQLEH) folds into the PAC domain. Residues 283 to 410 (QDYSLLLIDT…NDGRNRVLAA (128 aa)) form the GGDEF domain. D291 is a binding site for Mg(2+). The substrate site is built by N299, H304, and D308. Position 334 (E334) interacts with Mg(2+). E334 functions as the Proton acceptor in the catalytic mechanism.

As to quaternary structure, forms homodimers and homotetramers. Interacts with PdeR and MlrA. Mg(2+) serves as cofactor.

It catalyses the reaction 2 GTP = 3',3'-c-di-GMP + 2 diphosphate. The protein operates within purine metabolism; 3',5'-cyclic di-GMP biosynthesis. Activity is inhibited by the phosphodiesterase PdeR. Inhibition is relieved by high cellular c-di-GMP levels. Functionally, part of a signaling cascade that regulates curli biosynthesis. The cascade is composed of two cyclic-di-GMP (c-di-GMP) control modules, in which c-di-GMP controlled by the DgcE/PdeH pair (module I) regulates the activity of the DgcM/PdeR pair (module II), which in turn regulates activity of the transcription factor MlrA and expression of the master biofilm regulator csgD. DgcM stimulates activity of MlrA by direct interaction, leading to the transcription of csgD. It also catalyzes the synthesis of c-di-GMP via the condensation of 2 GTP molecules, which contributes to the c-di-GMP pool generated by module I in a positive feedback loop. Production of c-di-GMP contributes to but is not essential for MlrA activation. The polypeptide is Diguanylate cyclase DgcM (Escherichia coli (strain K12)).